The chain runs to 406 residues: Arginine deiminase (406 aa).

The Amidino-cysteine intermediate role is filled by Cys-396.

Belongs to the arginine deiminase family.

It is found in the cytoplasm. It carries out the reaction L-arginine + H2O = L-citrulline + NH4(+). It participates in amino-acid degradation; L-arginine degradation via ADI pathway; carbamoyl phosphate from L-arginine: step 1/2. The polypeptide is Arginine deiminase (Aliivibrio fischeri (strain MJ11) (Vibrio fischeri)).